The chain runs to 288 residues: Long chain fatty acid elongase 1 (288 aa).

Transmembrane regions (helical) follow at residues 39 to 59 (FFAD…VVVF), 73 to 93 (LTIP…AGAV), 126 to 146 (WVWL…FLVL), 150 to 170 (PLMF…WYSH), 180 to 197 (GIYL…YYFL), 217 to 237 (IVQF…MHFT), and 247 to 267 (VFKL…NFFL).

It belongs to the ELO family.

It is found in the membrane. The catalysed reaction is (6Z,9Z,12Z)-octadecatrienoyl-CoA + malonyl-CoA + H(+) = (8Z,11Z,14Z)-3-oxoeicosatrienoyl-CoA + CO2 + CoA. The enzyme catalyses (6Z,9Z,12Z,15Z)-octadecatetraenoyl-CoA + malonyl-CoA + H(+) = (8Z,11Z,14Z,17Z)-3-oxoicosatetraenoyl-CoA + CO2 + CoA. It catalyses the reaction (9Z)-hexadecenoyl-CoA + malonyl-CoA + H(+) = 3-oxo-(11Z)-octadecenoyl-CoA + CO2 + CoA. Its pathway is lipid metabolism; fatty acid biosynthesis. In terms of biological role, catalyzes the first and rate-limiting reaction of the four reactions that constitute the long-chain fatty acids elongation cycle. Uses malonyl-CoA to add 2 carbons per cycle to the chain of long-chain fatty acids. Condensing enzyme that catalyzes the elongation of monounsaturated (MUFA) and polyunsaturated (PUFA) fatty acids that are involved in multiple biological processes as precursors of membrane lipids and lipid mediators. This is Long chain fatty acid elongase 1 from Caenorhabditis elegans.